A 311-amino-acid chain; its full sequence is tRNA-cytidine(32) 2-sulfurtransferase (311 aa).

The PP-loop motif signature appears at 47–52 (SGGKDS). Positions 122, 125, and 213 each coordinate [4Fe-4S] cluster.

The protein belongs to the TtcA family. Homodimer. The cofactor is Mg(2+). [4Fe-4S] cluster is required as a cofactor.

The protein localises to the cytoplasm. The enzyme catalyses cytidine(32) in tRNA + S-sulfanyl-L-cysteinyl-[cysteine desulfurase] + AH2 + ATP = 2-thiocytidine(32) in tRNA + L-cysteinyl-[cysteine desulfurase] + A + AMP + diphosphate + H(+). The protein operates within tRNA modification. Its function is as follows. Catalyzes the ATP-dependent 2-thiolation of cytidine in position 32 of tRNA, to form 2-thiocytidine (s(2)C32). The sulfur atoms are provided by the cysteine/cysteine desulfurase (IscS) system. The protein is tRNA-cytidine(32) 2-sulfurtransferase of Salmonella typhi.